The following is a 406-amino-acid chain: Uronyl 2-sulfotransferase (406 aa).

Residues 1-49 lie on the Cytoplasmic side of the membrane; that stretch reads MKKKQQHPGGGADPWPHGAPMGGAPPGLGSWKRRVPLLPFLRFSLRDYG. Residues 50 to 70 form a helical; Signal-anchor for type II membrane protein membrane-spanning segment; it reads FCMATLLVFCLGSLLYQLSGG. Topologically, residues 71–406 are lumenal; sequence PPRFLLDLRQ…EKWLEDIYKR (336 aa). 3 N-linked (GlcNAc...) asparagine glycosylation sites follow: asparagine 84, asparagine 140, and asparagine 155. The active site involves histidine 168. N-linked (GlcNAc...) asparagine glycans are attached at residues asparagine 173 and asparagine 319. The span at 387–399 shows a compositional bias: acidic residues; it reads EPIDDEEQDDEKW. The segment at 387 to 406 is disordered; the sequence is EPIDDEEQDDEKWLEDIYKR.

It belongs to the sulfotransferase 3 family. As to expression, widely expressed.

Its subcellular location is the golgi apparatus membrane. Its function is as follows. Sulfotransferase that catalyzes the transfer of sulfate to the position 2 of uronyl residues in glycosaminoglycan chains. Has mainly activity toward iduronyl residues in dermatan sulfate, and weaker activity toward glucuronyl residues of chondroitin sulfate. Has little to no activity toward desulfated N-resulfated heparin or N-sulfoheparosan. The chain is Uronyl 2-sulfotransferase from Homo sapiens (Human).